We begin with the raw amino-acid sequence, 103 residues long: Large ribosomal subunit protein bL21 (103 aa).

The protein belongs to the bacterial ribosomal protein bL21 family. As to quaternary structure, part of the 50S ribosomal subunit. Contacts protein L20.

In terms of biological role, this protein binds to 23S rRNA in the presence of protein L20. In Desulfitobacterium hafniense (strain DSM 10664 / DCB-2), this protein is Large ribosomal subunit protein bL21.